Here is a 317-residue protein sequence, read N- to C-terminus: tRNA dimethylallyltransferase (317 aa).

14–21 (GPTAVGKT) is an ATP binding site. 16–21 (TAVGKT) lines the substrate pocket. The tract at residues 39 to 42 (DSMQ) is interaction with substrate tRNA.

Belongs to the IPP transferase family. As to quaternary structure, monomer. Mg(2+) serves as cofactor.

The catalysed reaction is adenosine(37) in tRNA + dimethylallyl diphosphate = N(6)-dimethylallyladenosine(37) in tRNA + diphosphate. Functionally, catalyzes the transfer of a dimethylallyl group onto the adenine at position 37 in tRNAs that read codons beginning with uridine, leading to the formation of N6-(dimethylallyl)adenosine (i(6)A). In Bacillus thuringiensis subsp. konkukian (strain 97-27), this protein is tRNA dimethylallyltransferase.